The sequence spans 85 residues: Large ribosomal subunit protein bL27 (85 aa).

The tract at residues 1–22 (MAKTKAGGSTRNGRDSKGRRLG) is disordered.

The protein belongs to the bacterial ribosomal protein bL27 family.

This is Large ribosomal subunit protein bL27 from Mycoplasmopsis pulmonis (strain UAB CTIP) (Mycoplasma pulmonis).